The primary structure comprises 138 residues: Large ribosomal subunit protein eL32 (138 aa).

Belongs to the eukaryotic ribosomal protein eL32 family.

This Saccharolobus islandicus (strain Y.N.15.51 / Yellowstone #2) (Sulfolobus islandicus) protein is Large ribosomal subunit protein eL32.